An 824-amino-acid chain; its full sequence is Leucine--tRNA ligase (824 aa).

The 'HIGH' region signature appears at 40 to 50; the sequence is PYPSGKIHMGH. The 'KMSKS' region signature appears at 580 to 584; it reads KMSKS. Lysine 583 contacts ATP.

The protein belongs to the class-I aminoacyl-tRNA synthetase family.

It is found in the cytoplasm. The enzyme catalyses tRNA(Leu) + L-leucine + ATP = L-leucyl-tRNA(Leu) + AMP + diphosphate. The protein is Leucine--tRNA ligase of Alkaliphilus metalliredigens (strain QYMF).